We begin with the raw amino-acid sequence, 365 residues long: Protein YIM1 (365 aa).

Belongs to the YIM1 family.

It is found in the lipid droplet. The protein localises to the mitochondrion. The sequence is that of Protein YIM1 (YIM1) from Saccharomyces cerevisiae (strain RM11-1a) (Baker's yeast).